We begin with the raw amino-acid sequence, 236 residues long: tRNA (guanine-N(1)-)-methyltransferase (236 aa).

S-adenosyl-L-methionine-binding positions include Gly-112 and 132 to 137 (VGDFIL).

Belongs to the RNA methyltransferase TrmD family. Homodimer.

The protein resides in the cytoplasm. The catalysed reaction is guanosine(37) in tRNA + S-adenosyl-L-methionine = N(1)-methylguanosine(37) in tRNA + S-adenosyl-L-homocysteine + H(+). Specifically methylates guanosine-37 in various tRNAs. This chain is tRNA (guanine-N(1)-)-methyltransferase, found in Campylobacter curvus (strain 525.92).